Here is a 356-residue protein sequence, read N- to C-terminus: Proline-rich protein 19 (356 aa).

Residues 1-12 show a composition bias toward polar residues; sequence MDTQGPVSQPFQ. 4 disordered regions span residues 1-53, 95-143, 216-255, and 312-331; these read MDTQ…RDPP, LVPG…ELSG, INSP…RGSL, and PSSP…SPPS. Over residues 19 to 29 the composition is skewed to basic residues; the sequence is RVRRRKTRRER.

In terms of assembly, interacts with CNTD1.

Its subcellular location is the nucleus. It is found in the chromosome. In terms of biological role, promotes meiotic crossing over formation through its interaction with CNTD1 by participating in the crossover differentiation step of crossover-specific recombination intermediates. This is Proline-rich protein 19 from Homo sapiens (Human).